Consider the following 228-residue polypeptide: Apoptosis regulator R1 (228 aa).

The span at 1–21 (LNPKKKENNGVKNGDREKQHE) shows a compositional bias: basic and acidic residues. Positions 1–29 (LNPKKKENNGVKNGDREKQHETGNTIFRG) are disordered. The short motif at 120–139 (SLFQGGVNWGRIVAFFVFGA) is the BH1 element. Residues 171–186 (DWIQSNGGWNGFLTLY) carry the BH2 motif. Residues 207–227 (TVLTGAVALGALMTVGALFAS) form a helical membrane-spanning segment.

Belongs to the Bcl-2 family.

Its subcellular location is the membrane. In terms of biological role, could be the homolog of mammalian Bcl-W. This is Apoptosis regulator R1 from Xenopus laevis (African clawed frog).